A 319-amino-acid chain; its full sequence is Protease HtpX homolog (319 aa).

2 helical membrane passes run 6–26 (TAML…VIGG) and 28–48 (GGMM…YWNS). His-130 is a binding site for Zn(2+). Glu-131 is an active-site residue. Residue His-134 coordinates Zn(2+). 2 helical membrane passes run 145–165 (LTAT…FFGG) and 172–192 (PLGF…AMLV). Glu-201 lines the Zn(2+) pocket. The interval 279–319 (REMSAGSTAPARPDNAVRRSRSVPKTGWGRGGSEPPKGPWS) is disordered.

It belongs to the peptidase M48B family. Zn(2+) serves as cofactor.

Its subcellular location is the cell inner membrane. In Sinorhizobium fredii (strain NBRC 101917 / NGR234), this protein is Protease HtpX homolog.